Here is a 1500-residue protein sequence, read N- to C-terminus: Carbamoyl-phosphate synthase [ammonia], mitochondrial (1500 aa).

Residues 1-38 (MTRILTACKVVKTLKSGFGLANVTSKRQWDFSRPGIRL) constitute a mitochondrion transit peptide. Residues 39–218 (LSVKAQTAHI…VKVFGKGNPT (180 aa)) form an anthranilate phosphoribosyltransferase homolog region. N6-acetyllysine; alternate is present on residues K55, K57, and K119. K55 is subject to N6-glutaryllysine; alternate. Residues K55, K57, and K119 each carry the N6-succinyllysine; alternate modification. Phosphoserine is present on S148. 2 positions are modified to N6-acetyllysine; alternate: K157 and K171. K157 carries the N6-succinyllysine; alternate modification. N6-glutaryllysine; alternate is present on K171. K176 carries the post-translational modification N6-glutaryllysine. An N6-acetyllysine modification is found at K182. A Phosphoserine modification is found at S189. K197 bears the N6-acetyllysine mark. N6-acetyllysine; alternate is present on residues K207, K210, K214, K219, and K228. 5 positions are modified to N6-glutaryllysine; alternate: K207, K210, K214, K219, and K228. K207 is subject to N6-succinyllysine; alternate. At K214 the chain carries N6-succinyllysine; alternate. Residues 219 to 404 (KVVAVDCGIK…FSLIKKGKGT (186 aa)) enclose the Glutamine amidotransferase type-1 domain. K237 carries the N6-glutaryllysine modification. K279 is modified (N6-acetyllysine). N6-acetyllysine; alternate is present on residues K280, K287, K307, and K310. K280 is modified (N6-glutaryllysine; alternate). K287 and K307 each carry N6-succinyllysine; alternate. N6-glutaryllysine; alternate is present on residues K307 and K310. The residue at position 400 (K400) is an N6-succinyllysine. N6-glutaryllysine; alternate occurs at positions 402, 412, 453, and 458. Residues K402 and K412 each carry the N6-succinyllysine; alternate modification. An N6-acetyllysine; alternate mark is found at K412, K453, K458, K522, K527, and K532. Residues K458, K522, and K527 each carry the N6-succinyllysine; alternate modification. K527 and K532 each carry N6-glutaryllysine; alternate. Residue S537 is modified to Phosphoserine; alternate. A glycan (O-linked (GlcNAc) serine; alternate) is linked at S537. At S540 the chain carries Phosphoserine. The 193-residue stretch at 551-743 (SDKLNEINEK…LAFIAAKIAL (193 aa)) folds into the ATP-grasp 1 domain. N6-acetyllysine; alternate is present on residues K553 and K560. K553 bears the N6-glutaryllysine; alternate mark. 2 positions are modified to N6-succinyllysine; alternate: K553 and K560. At S569 the chain carries Phosphoserine. N6-acetyllysine; alternate is present on residues K575, K603, and K612. K575, K603, and K612 each carry N6-succinyllysine; alternate. Position 630 is an N6-acetyllysine (K630). K728 is modified (N6-glutaryllysine). N6-acetyllysine; alternate occurs at positions 751, 757, 772, 793, 811, 831, 841, and 856. Residues K751 and K757 each carry the N6-succinyllysine; alternate modification. 4 positions are modified to N6-glutaryllysine; alternate: K757, K772, K793, and K811. N6-succinyllysine; alternate is present on K793. Residue K831 is modified to N6-succinyllysine; alternate. N6-glutaryllysine; alternate is present on residues K841 and K856. An N6-glutaryllysine modification is found at K869. An N6-acetyllysine; alternate mark is found at K875, K889, and K892. 3 positions are modified to N6-glutaryllysine; alternate: K875, K889, and K892. N6-succinyllysine; alternate is present on residues K875, K889, and K892. S896 and S898 each carry phosphoserine. K908, K915, and K919 each carry N6-acetyllysine; alternate. N6-glutaryllysine; alternate is present on residues K908, K915, and K919. K915 and K919 each carry N6-succinyllysine; alternate. The residue at position 935 (K935) is an N6-acetyllysine. Residue S1036 is modified to Phosphoserine. At K1074 the chain carries N6-acetyllysine; alternate. K1074 is modified (N6-glutaryllysine; alternate). K1074 is subject to N6-succinyllysine; alternate. S1079, S1090, and S1093 each carry phosphoserine. One can recognise an ATP-grasp 2 domain in the interval 1093-1284 (SAVLDELKVA…FIDVATKVMI (192 aa)). K1100 is modified (N6-acetyllysine; alternate). N6-succinyllysine; alternate is present on K1100. Position 1149 is an N6-succinyllysine (K1149). Residues K1168 and K1183 each carry the N6-acetyllysine; alternate modification. N6-glutaryllysine; alternate is present on residues K1168 and K1183. An N6-succinyllysine; alternate mark is found at K1168 and K1183. S1203 carries the phosphoserine modification. K1222 carries the post-translational modification N6-acetyllysine. Residue K1224 is modified to N6-glutaryllysine. An N6-acetyllysine; alternate mark is found at K1232, K1269, and K1291. N6-succinyllysine; alternate is present on residues K1232, K1269, and K1291. S1331 is a glycosylation site (O-linked (GlcNAc) serine). T1332 carries an O-linked (GlcNAc) threonine glycan. Residues 1355–1500 (FKIPQKGILI…YRQYSAGKAA (146 aa)) form the MGS-like domain. K1356 bears the N6-acetyllysine; alternate mark. N6-glutaryllysine; alternate is present on residues K1356 and K1360. N6-succinyllysine; alternate is present on residues K1356 and K1360. 3 residues coordinate N-acetyl-L-glutamate: T1391, T1394, and W1410. Residues S1419 and S1431 each carry the phosphoserine modification. N1437 and N1440 together coordinate N-acetyl-L-glutamate. K1444 carries the N6-acetyllysine; alternate modification. An N6-succinyllysine; alternate modification is found at K1444. N1449 serves as a coordination point for N-acetyl-L-glutamate. K1471, K1479, and K1486 each carry N6-acetyllysine; alternate. Residues K1471, K1479, and K1486 each carry the N6-succinyllysine; alternate modification. N6-glutaryllysine; alternate is present on residues K1479 and K1486.

Can form homooligomers (monomers as predominant form and dimers). In terms of processing, 50% of the mature protein that was isolated had Leu-39 as its N-terminal residue and 50% had Ser-40 suggesting two adjacent processing sites. However, the possibility of proteolytic removal of Leu-39 during the isolation of the enzyme cannot be excluded. Undergoes proteolytic cleavage in the C-terminal region corresponding to the loss of approximately 12 AA residues from the C-terminus. Succinylated at Lys-287 and Lys-1291. Desuccinylated at Lys-1291 by SIRT5, leading to activation. Post-translationally, glutarylated. Glutarylation levels increase during fasting. Deglutarylated by SIRT5 at Lys-55, Lys-219, Lys-412, Lys-889, Lys-892, Lys-915, Lys-1360 and Lys-1486, leading to activation. In terms of tissue distribution, primarily in the liver and small intestine.

It is found in the mitochondrion. It localises to the nucleus. Its subcellular location is the nucleolus. The protein localises to the cell membrane. It catalyses the reaction hydrogencarbonate + NH4(+) + 2 ATP = carbamoyl phosphate + 2 ADP + phosphate + 2 H(+). Its activity is regulated as follows. Requires N-acetyl-L-glutamate (NAG) as an allosteric activator. N-acetyl-L-beta-phenylglutamate (Phe-NAG) can also activate CPSase I, but with an activation constant that is 2-fold higher than that for NAG. Its function is as follows. Involved in the urea cycle of ureotelic animals where the enzyme plays an important role in removing excess ammonia from the cell. This chain is Carbamoyl-phosphate synthase [ammonia], mitochondrial (Cps1), found in Rattus norvegicus (Rat).